Here is a 334-residue protein sequence, read N- to C-terminus: Tetratricopeptide repeat protein 24 (334 aa).

TPR repeat units follow at residues 35 to 68 (GPFY…CRQP), 72 to 105 (ATVL…HGSV), 112 to 145 (GRSF…AQDT), and 152 to 185 (WQAC…CQHE). A disordered region spans residues 220–258 (PGKLQTSRKAKTSARVQSSAEDAQESQWEGEASEGGHEK). Over residues 233 to 246 (ARVQSSAEDAQESQ) the composition is skewed to polar residues.

This is Tetratricopeptide repeat protein 24 (Ttc24) from Mus musculus (Mouse).